Here is a 340-residue protein sequence, read N- to C-terminus: CRISPR-associated protein Cas7 (340 aa).

In terms of assembly, component of the Cascade-like complex (Cascade I-B), composed of Cas5, Cas6, Cas7 and crRNA.

It is found in the cytoplasm. CRISPR (clustered regularly interspaced short palindromic repeat) is an adaptive immune system that provides protection against mobile genetic elements (viruses, transposable elements and conjugative plasmids). CRISPR clusters contain sequences complementary to antecedent mobile elements and target invading nucleic acids. CRISPR clusters are transcribed and processed into CRISPR RNA (crRNA). Plasmid targeted by CRISPR locus P1 transform wild-type cells very poorly. This protein helps process or stabilize pre-crRNA into individual crRNA units, in vivo Cas6 and Cas7 are also required for optimal crRNA processing and/or stability. This Haloferax volcanii (strain ATCC 29605 / DSM 3757 / JCM 8879 / NBRC 14742 / NCIMB 2012 / VKM B-1768 / DS2) (Halobacterium volcanii) protein is CRISPR-associated protein Cas7.